The chain runs to 315 residues: Methionyl-tRNA formyltransferase (315 aa).

113–116 (SLLP) serves as a coordination point for (6S)-5,6,7,8-tetrahydrofolate.

The protein belongs to the Fmt family.

It catalyses the reaction L-methionyl-tRNA(fMet) + (6R)-10-formyltetrahydrofolate = N-formyl-L-methionyl-tRNA(fMet) + (6S)-5,6,7,8-tetrahydrofolate + H(+). Its function is as follows. Attaches a formyl group to the free amino group of methionyl-tRNA(fMet). The formyl group appears to play a dual role in the initiator identity of N-formylmethionyl-tRNA by promoting its recognition by IF2 and preventing the misappropriation of this tRNA by the elongation apparatus. The sequence is that of Methionyl-tRNA formyltransferase from Klebsiella pneumoniae (strain 342).